The sequence spans 152 residues: Siroheme decarboxylase beta subunit (152 aa).

This sequence belongs to the Ahb/Nir family. As to quaternary structure, forms a heterodimer composed of AhbA and AhbB.

The enzyme catalyses siroheme + 2 H(+) = 12,18-didecarboxysiroheme + 2 CO2. Its pathway is porphyrin-containing compound metabolism; protoheme biosynthesis. Its activity is regulated as follows. Binds heme b. The redox state of the heme b modulates the activity of the enzyme. Activity is stimulated by sodium dithionite. Involved in siroheme-dependent heme b biosynthesis. Catalyzes the decarboxylation of siroheme into didecarboxysiroheme. The polypeptide is Siroheme decarboxylase beta subunit (Methanosarcina barkeri (strain Fusaro / DSM 804)).